The chain runs to 127 residues: UPF0102 protein NFA_41430 (127 aa).

Belongs to the UPF0102 family.

In Nocardia farcinica (strain IFM 10152), this protein is UPF0102 protein NFA_41430.